The chain runs to 409 residues: Menaquinone reductase (409 aa).

FAD-binding positions include 11 to 15, 44 to 47, R101, V125, D288, and 300 to 301; these read GAGPA, CGDG, and GI.

The protein belongs to the geranylgeranyl reductase family. FAD is required as a cofactor.

The catalysed reaction is menaquinone-9 + AH2 = beta-dihydromenaquinone-9 + A. Its pathway is quinol/quinone metabolism; menaquinone biosynthesis. Catalyzes the reduction of a single double bond in the isoprenoid tail of menaquinone (MK-9) in M.smegmatis, likely the beta-isoprene unit, forming the predominant form of menaquinone found in mycobacteria, MK-9(II-H2). This is Menaquinone reductase from Mycolicibacterium smegmatis (strain ATCC 700084 / mc(2)155) (Mycobacterium smegmatis).